A 1044-amino-acid polypeptide reads, in one-letter code: Diacylglycerol lipase-alpha (1044 aa).

Topologically, residues 1–22 (MPGIVVFRRRWSVGSDDLVLPA) are cytoplasmic. Residues 23–43 (IFLFLLHTTWFVILSVVLFGL) traverse the membrane as a helical segment. At 44–60 (VYNPHEACSLNLVDHGR) the chain is on the extracellular side. A helical membrane pass occupies residues 61 to 81 (GYLGILLSCMIAEMAIIWLSM). The Cytoplasmic segment spans residues 82–101 (RGGILYTEPRDSMQYVLYVR). The helical transmembrane segment at 102–122 (LAILVIEFIYAIVGIVWLTQY) threads the bilayer. Residues 123 to 136 (YTSCNDLTAKNVTL) are Extracellular-facing. N133 is a glycosylation site (N-linked (GlcNAc...) asparagine). A helical membrane pass occupies residues 137 to 157 (GMVVCNWVVILSVCITVLCVF). The Cytoplasmic portion of the chain corresponds to 158-1044 (DPTGRTFVKL…KQDDLVISAR (887 aa)). Active-site charge relay system residues include S472 and D524. Phosphoserine is present on residues S728, S730, S733, S744, S784, S786, S808, S810, S835, S849, and S954. The disordered stretch occupies residues 848-897 (LSKHSQDTQPLEAALGSGGVTPERPPSATIEEEEAAGGSEGGGVAPRGEL). The disordered stretch occupies residues 1013 to 1044 (QECLATDKIRTSTPTGHGASPTKQDDLVISAR). Position 1025 is a phosphothreonine (T1025).

This sequence belongs to the AB hydrolase superfamily. Lipase family. As to quaternary structure, interacts (via C-terminal) with CAMK2A; leading to the phosphorylation and inhibition of DAGLA enzymatic activity. Interacts (via PPXXF motif) with HOMER1 and HOMER2; this interaction is required for DAGLA membrane localization. Ca(2+) is required as a cofactor. Post-translationally, phosphorylated at Ser-784 and Ser-810 by CAMK2A; phosphorylation by CAMK2A inhibits diacylglycerol lipase activity. Highly expressed by principal cells in the hippocampus. In embryonic brains, it is present in axonal tracts, while in adults it localizes to dendritic fields, correlating with the developmental change in requirement for 2-AG synthesis from the pre- to the postsynaptic compartment. Concentrated in heads of dendritic spines throughout the hippocampal formation. Highly compartmentalized into a wide perisynaptic annulus around the postsynaptic density of axospinous contacts but not intrasynaptically (at protein level).

It is found in the cell membrane. Its subcellular location is the cell projection. The protein resides in the dendritic spine membrane. The protein localises to the postsynaptic density membrane. It localises to the early endosome membrane. It catalyses the reaction a 1,2-diacyl-sn-glycerol + H2O = a 2-acylglycerol + a fatty acid + H(+). It carries out the reaction 1-octadecanoyl-2-(5Z,8Z,11Z,14Z-eicosatetraenoyl)-sn-glycerol + H2O = 2-(5Z,8Z,11Z,14Z-eicosatetraenoyl)-glycerol + octadecanoate + H(+). The enzyme catalyses 1,2-di-(9Z-octadecenoyl)-sn-glycerol + H2O = 2-(9Z-octadecenoyl)-glycerol + (9Z)-octadecenoate + H(+). The catalysed reaction is 1-(9Z-octadecenoyl)-2-(5Z,8Z,11Z,14Z-eicosatetraenoyl)-sn-glycerol + H2O = 2-(5Z,8Z,11Z,14Z-eicosatetraenoyl)-glycerol + (9Z)-octadecenoate + H(+). It catalyses the reaction 1-(9Z-octadecenoyl)-2-octadecanoyl-sn-glycerol + H2O = 2-octadecanoylglycerol + (9Z)-octadecenoate + H(+). It carries out the reaction 1-(9Z-octadecenoyl)-2-(9Z,12Z-octadecadienoyl)-sn-glycerol + H2O = 2-(9Z,12Z-octadecadienoyl)-glycerol + (9Z)-octadecenoate + H(+). The enzyme catalyses 1-(9Z-octadecenoyl)-2-O-(5Z,8Z,11Z,14Z-eicosatetraenyl)-sn-glycerol + H2O = 2-O-(5Z,8Z,11Z,14Z)-eicosatetraenylglycerol + (9Z)-octadecenoate + H(+). Its activity is regulated as follows. Inhibited by 1,2,3-triazole urea covalent inhibitor KT172, DH376 and DO34. Inhibited by p-hydroxy-mercuri-benzoate and HgCl(2), but not to PMSF. Also inhibited by RHC80267. Diacylglycerol lipase activity is inhibited by the phosphorylation of Ser-784 and Ser-810 by CAMK2A. In terms of biological role, serine hydrolase that hydrolyzes arachidonic acid-esterified diacylglycerols (DAGs) to produce the principal endocannabinoid (eCB), 2-arachidonoylglycerol (2-AG). Preferentially hydrolyzes sn-1 fatty acids from diacylglycerols (DAG) that contain arachidonic acid (AA) esterified at the sn-2 position to biosynthesize 2-AG. Has negligible activity against other lipids including monoacylglycerols and phospholipids. Plays a key role in regulating 2-AG signaling in the central nervous system (CNS). Controls the activity of 2-AG as a retrograde messenger at neuronal synapses. Supports axonal growth during development and adult neurogenesis. Plays a role for eCB signaling in the physiological regulation of anxiety and depressive behaviors. Also regulates neuroinflammatory responses in the brain, in particular, LPS-induced microglial activation. In Mus musculus (Mouse), this protein is Diacylglycerol lipase-alpha (Dagla).